Consider the following 348-residue polypeptide: Holliday junction branch migration complex subunit RuvB (348 aa).

The segment at 1–183 is large ATPase domain (RuvB-L); it reads MTDPSRLVTP…FGIPVRLNFY (183 aa). Residues Leu-22, Arg-23, Gly-64, Lys-67, Thr-68, Thr-69, 130-132, Arg-173, Tyr-183, and Arg-220 contribute to the ATP site; that span reads EDF. Mg(2+) is bound at residue Thr-68. The interval 184–254 is small ATPAse domain (RuvB-S); the sequence is TIEELESIVS…IADHALGALE (71 aa). The head domain (RuvB-H) stretch occupies residues 257–348; the sequence is AAGLDAMDRR…FGLFGGEEEA (92 aa). DNA-binding residues include Arg-293, Arg-312, and Arg-317.

The protein belongs to the RuvB family. As to quaternary structure, homohexamer. Forms an RuvA(8)-RuvB(12)-Holliday junction (HJ) complex. HJ DNA is sandwiched between 2 RuvA tetramers; dsDNA enters through RuvA and exits via RuvB. An RuvB hexamer assembles on each DNA strand where it exits the tetramer. Each RuvB hexamer is contacted by two RuvA subunits (via domain III) on 2 adjacent RuvB subunits; this complex drives branch migration. In the full resolvosome a probable DNA-RuvA(4)-RuvB(12)-RuvC(2) complex forms which resolves the HJ.

It is found in the cytoplasm. It carries out the reaction ATP + H2O = ADP + phosphate + H(+). Functionally, the RuvA-RuvB-RuvC complex processes Holliday junction (HJ) DNA during genetic recombination and DNA repair, while the RuvA-RuvB complex plays an important role in the rescue of blocked DNA replication forks via replication fork reversal (RFR). RuvA specifically binds to HJ cruciform DNA, conferring on it an open structure. The RuvB hexamer acts as an ATP-dependent pump, pulling dsDNA into and through the RuvAB complex. RuvB forms 2 homohexamers on either side of HJ DNA bound by 1 or 2 RuvA tetramers; 4 subunits per hexamer contact DNA at a time. Coordinated motions by a converter formed by DNA-disengaged RuvB subunits stimulates ATP hydrolysis and nucleotide exchange. Immobilization of the converter enables RuvB to convert the ATP-contained energy into a lever motion, pulling 2 nucleotides of DNA out of the RuvA tetramer per ATP hydrolyzed, thus driving DNA branch migration. The RuvB motors rotate together with the DNA substrate, which together with the progressing nucleotide cycle form the mechanistic basis for DNA recombination by continuous HJ branch migration. Branch migration allows RuvC to scan DNA until it finds its consensus sequence, where it cleaves and resolves cruciform DNA. This is Holliday junction branch migration complex subunit RuvB from Rhodopseudomonas palustris (strain HaA2).